The sequence spans 558 residues: Asparagine--tRNA ligase, cytoplasmic (558 aa).

The residue at position 71 (S71) is a Phosphoserine. The segment at 79–101 (MWHREQMKSESREKKEAEDSLRR) is disordered. Basic and acidic residues predominate over residues 81–101 (HREQMKSESREKKEAEDSLRR). N6-acetyllysine occurs at positions 254 and 500.

Belongs to the class-II aminoacyl-tRNA synthetase family. As to quaternary structure, homodimer.

The protein resides in the cytoplasm. It carries out the reaction tRNA(Asn) + L-asparagine + ATP = L-asparaginyl-tRNA(Asn) + AMP + diphosphate + H(+). Catalyzes the attachment of asparagine to tRNA(Asn) in a two-step reaction: asparagine is first activated by ATP to form Asn-AMP and then transferred to the acceptor end of tRNA(Asn). In addition to its essential role in protein synthesis, acts as a signaling molecule that induced migration of CCR3-expressing cells. Has an essential role in the development of the cerebral cortex, being required for proper proliferation of radial glial cells. The protein is Asparagine--tRNA ligase, cytoplasmic of Macaca fascicularis (Crab-eating macaque).